A 182-amino-acid chain; its full sequence is Dynactin subunit 5 (182 aa).

Met-1 is subject to N-acetylmethionine.

It belongs to the dynactin subunits 5/6 family. Dynactin subunit 5 subfamily. As to quaternary structure, subunit of dynactin, a multiprotein complex part of a tripartite complex with dynein and a adapter, such as BICDL1, BICD2 or HOOK3. The dynactin complex is built around ACTR1A/ACTB filament and consists of an actin-related filament composed of a shoulder domain, a pointed end and a barbed end. Its length is defined by its flexible shoulder domain. The soulder is composed of 2 DCTN1 subunits, 4 DCTN2 and 2 DCTN3. The 4 DCNT2 (via N-terminus) bind the ACTR1A filament and act as molecular rulers to determine the length. The pointed end is important for binding dynein-dynactin cargo adapters. Consists of 4 subunits: ACTR10, DCNT4, DCTN5 and DCTN6. Within the complex DCTN6 forms a heterodimer with DCTN5. The barbed end is composed of a CAPZA1:CAPZB heterodimers, which binds ACTR1A/ACTB filament and dynactin and stabilizes dynactin. Interacts with N4BP2L1.

Its subcellular location is the cytoplasm. It is found in the cytoskeleton. The protein localises to the chromosome. The protein resides in the centromere. It localises to the kinetochore. Part of the dynactin complex that activates the molecular motor dynein for ultra-processive transport along microtubules. The protein is Dynactin subunit 5 (DCTN5) of Pongo abelii (Sumatran orangutan).